The following is a 239-amino-acid chain: Cytochrome b6-f complex iron-sulfur subunit 1, cyanelle (239 aa).

The N-terminal 60 residues, 1-60 (MAFTTTAVVAPRGAKITGQSSTCAIQNGKTVAVGTSKQVGSFKPVFAAAKPAKETTFSVS), are a transit peptide targeting the cyanelle. Residues 81–101 (LLGAIAGPVAGAGGPFVSFLV) traverse the membrane as a helical segment. The Rieske domain occupies 125–221 (VSSWLETHKP…VSVLEDGVVA (97 aa)). [2Fe-2S] cluster is bound by residues cysteine 167, histidine 169, cysteine 185, and histidine 188. A disulfide bridge connects residues cysteine 172 and cysteine 187.

The protein belongs to the Rieske iron-sulfur protein family. As to quaternary structure, the 4 large subunits of the cytochrome b6-f complex are cytochrome b6, subunit IV (17 kDa polypeptide, petD), cytochrome f and the Rieske protein, while the 4 small subunits are petG, petL, petM and petN. The complex functions as a dimer. [2Fe-2S] cluster is required as a cofactor.

Its subcellular location is the plastid. The protein localises to the cyanelle thylakoid membrane. It carries out the reaction 2 oxidized [plastocyanin] + a plastoquinol + 2 H(+)(in) = 2 reduced [plastocyanin] + a plastoquinone + 4 H(+)(out). Its function is as follows. Component of the cytochrome b6-f complex, which mediates electron transfer between photosystem II (PSII) and photosystem I (PSI), cyclic electron flow around PSI, and state transitions. The chain is Cytochrome b6-f complex iron-sulfur subunit 1, cyanelle (petC-1) from Cyanophora paradoxa.